Reading from the N-terminus, the 164-residue chain is B-phycoerythrin alpha chain (164 aa).

Residues cysteine 82 and cysteine 139 each contribute to the (2R,3E)-phycoerythrobilin site.

This sequence belongs to the phycobiliprotein family. In terms of assembly, heteromer of 6 alpha, 6 beta and one gamma chain. Post-translationally, contains two covalently linked bilin chromophores.

The protein resides in the plastid. Its subcellular location is the chloroplast thylakoid membrane. In terms of biological role, light-harvesting photosynthetic bile pigment-protein from the phycobiliprotein complex. The sequence is that of B-phycoerythrin alpha chain (cpeA) from Porphyridium purpureum (Red alga).